A 20-amino-acid polypeptide reads, in one-letter code: Truncated non-structural protein of 4.9 kDa (20 aa).

Belongs to the coronaviruses ns4.9 protein family.

The chain is Truncated non-structural protein of 4.9 kDa from Sus scrofa (Pig).